Here is a 51-residue protein sequence, read N- to C-terminus: Large ribosomal subunit protein bL33 (51 aa).

It belongs to the bacterial ribosomal protein bL33 family.

In Nitrosococcus oceani (strain ATCC 19707 / BCRC 17464 / JCM 30415 / NCIMB 11848 / C-107), this protein is Large ribosomal subunit protein bL33.